Reading from the N-terminus, the 209-residue chain is Small ribosomal subunit protein uS4 (209 aa).

Positions 23-46 (SRNPLLKKPHPPGQHGMQRKKKSD) are disordered. Residues 93-156 (CRLDNMVYRM…RKLQSVQESL (64 aa)) enclose the S4 RNA-binding domain.

This sequence belongs to the universal ribosomal protein uS4 family. As to quaternary structure, part of the 30S ribosomal subunit. Contacts protein S5. The interaction surface between S4 and S5 is involved in control of translational fidelity.

Its function is as follows. One of the primary rRNA binding proteins, it binds directly to 16S rRNA where it nucleates assembly of the body of the 30S subunit. Functionally, with S5 and S12 plays an important role in translational accuracy. In Chlamydia caviae (strain ATCC VR-813 / DSM 19441 / 03DC25 / GPIC) (Chlamydophila caviae), this protein is Small ribosomal subunit protein uS4.